The following is a 219-amino-acid chain: Peroxiredoxin (219 aa).

A Thioredoxin domain is found at Pro-2–Lys-164. The active-site Cysteine sulfenic acid (-SOH) intermediate is the Cys-44. Arg-127 is a substrate binding site. The cysteines at positions 206 and 212 are disulfide-linked.

This sequence belongs to the peroxiredoxin family. Prx6 subfamily. Homodecamer. Pentamer of dimers that assemble into a ring structure.

Its subcellular location is the cytoplasm. It carries out the reaction a hydroperoxide + [thioredoxin]-dithiol = an alcohol + [thioredoxin]-disulfide + H2O. In terms of biological role, thiol-specific peroxidase that catalyzes the reduction of hydrogen peroxide and organic hydroperoxides to water and alcohols, respectively. Plays a role in cell protection against oxidative stress by detoxifying peroxides. The chain is Peroxiredoxin from Methanosarcina mazei (strain ATCC BAA-159 / DSM 3647 / Goe1 / Go1 / JCM 11833 / OCM 88) (Methanosarcina frisia).